Reading from the N-terminus, the 277-residue chain is Probable ketoamine kinase HMPREF0351_12196 (277 aa).

An ATP-binding site is contributed by Glu-84 to Ile-86. The active-site Proton acceptor is Asp-186.

The protein belongs to the fructosamine kinase family.

The enzyme catalyses N(6)-(D-ribulosyl)-L-lysine + ATP = N(6)-(3-O-phospho-D-ribulosyl)-L-lysine + ADP + H(+). It carries out the reaction N-(D-ribulosyl)-cadaverine + ATP = N-(3-O-phospho-D-ribulosyl)-cadaverine + ADP + H(+). The catalysed reaction is N(6)-(D-erythrulosyl)-L-lysine + ATP = N(6)-(3-O-phospho-D-erythrulosyl)-L-lysine + ADP + H(+). It catalyses the reaction N-(D-erythrulosyl)-cadaverine + ATP = N-(3-O-phospho-D-erythrulosyl)-cadaverine + ADP + H(+). The enzyme catalyses N(6)-D-ribulosyl-L-lysyl-[protein] + ATP = N(6)-(3-O-phospho-D-ribulosyl)-L-lysyl-[protein] + ADP + H(+). It carries out the reaction N(6)-(D-erythrulosyl)-L-lysyl-[protein] + ATP = N(6)-(3-O-phospho-D-erythrulosyl)-L-lysyl-[protein] + ADP + H(+). Functionally, ketoamine kinase that phosphorylates ketoamines, such as erythruloselysine, erythrulosecadaverine, ribuloselysine and ribulosecadaverine, on the third carbon of the sugar moiety to generate ketoamine 3-phosphate. Has higher activity on free lysine (erythruloselysine and ribuloselysine), than on ribuloselysine and erythruloselysine residues on glycated proteins. The sequence is that of Probable ketoamine kinase HMPREF0351_12196 from Enterococcus faecium (strain ATCC BAA-472 / TX0016 / DO).